The chain runs to 365 residues: tRNA(Met) cytidine acetate ligase (365 aa).

Residues 7–20 (IAEFNPFHNGHKYL), Gly-96, Asn-152, and Arg-175 contribute to the ATP site.

The protein belongs to the TmcAL family.

The protein resides in the cytoplasm. It catalyses the reaction cytidine(34) in elongator tRNA(Met) + acetate + ATP = N(4)-acetylcytidine(34) in elongator tRNA(Met) + AMP + diphosphate. In terms of biological role, catalyzes the formation of N(4)-acetylcytidine (ac(4)C) at the wobble position of elongator tRNA(Met), using acetate and ATP as substrates. First activates an acetate ion to form acetyladenylate (Ac-AMP) and then transfers the acetyl group to tRNA to form ac(4)C34. The polypeptide is tRNA(Met) cytidine acetate ligase (Streptococcus pneumoniae (strain Hungary19A-6)).